A 484-amino-acid chain; its full sequence is Probable glycine dehydrogenase (decarboxylating) subunit 2 (484 aa).

Lys270 carries the post-translational modification N6-(pyridoxal phosphate)lysine.

It belongs to the GcvP family. C-terminal subunit subfamily. As to quaternary structure, the glycine cleavage system is composed of four proteins: P, T, L and H. In this organism, the P 'protein' is a heterodimer of two subunits. The cofactor is pyridoxal 5'-phosphate.

It carries out the reaction N(6)-[(R)-lipoyl]-L-lysyl-[glycine-cleavage complex H protein] + glycine + H(+) = N(6)-[(R)-S(8)-aminomethyldihydrolipoyl]-L-lysyl-[glycine-cleavage complex H protein] + CO2. In terms of biological role, the glycine cleavage system catalyzes the degradation of glycine. The P protein binds the alpha-amino group of glycine through its pyridoxal phosphate cofactor; CO(2) is released and the remaining methylamine moiety is then transferred to the lipoamide cofactor of the H protein. This Desulforamulus reducens (strain ATCC BAA-1160 / DSM 100696 / MI-1) (Desulfotomaculum reducens) protein is Probable glycine dehydrogenase (decarboxylating) subunit 2.